Here is a 654-residue protein sequence, read N- to C-terminus: DNA ligase (654 aa).

Residues 32 to 36 and 81 to 82 contribute to the NAD(+) site; these read DAVYD and SL. The active-site N6-AMP-lysine intermediate is Lys-112. Residues Arg-133, Glu-167, and Lys-306 each coordinate NAD(+). Positions 400, 403, 416, and 421 each coordinate Zn(2+). The BRCT domain maps to 577–654; it reads ESSSIFSHKT…EEELLKYLKE (78 aa).

It belongs to the NAD-dependent DNA ligase family. LigA subfamily. The cofactor is Mg(2+). It depends on Mn(2+) as a cofactor.

It catalyses the reaction NAD(+) + (deoxyribonucleotide)n-3'-hydroxyl + 5'-phospho-(deoxyribonucleotide)m = (deoxyribonucleotide)n+m + AMP + beta-nicotinamide D-nucleotide.. Functionally, DNA ligase that catalyzes the formation of phosphodiester linkages between 5'-phosphoryl and 3'-hydroxyl groups in double-stranded DNA using NAD as a coenzyme and as the energy source for the reaction. It is essential for DNA replication and repair of damaged DNA. The sequence is that of DNA ligase from Helicobacter acinonychis (strain Sheeba).